A 215-amino-acid polypeptide reads, in one-letter code: Cytochrome b6 (215 aa).

A helical transmembrane segment spans residues 32 to 52 (IFYCLGGITLTCFLVQVATGF). Residue C35 participates in heme c binding. 2 residues coordinate heme b: H86 and H100. 3 helical membrane passes run 90–110 (ASMMVLMMILHVFRVYLTGGF), 116–136 (LTWVTGVILAVLTASFGVTGY), and 186–206 (LHTFVLPLLTAVFMLMHFPMI). H187 and H202 together coordinate heme b.

It belongs to the cytochrome b family. PetB subfamily. As to quaternary structure, the 4 large subunits of the cytochrome b6-f complex are cytochrome b6, subunit IV (17 kDa polypeptide, PetD), cytochrome f and the Rieske protein, while the 4 small subunits are PetG, PetL, PetM and PetN. The complex functions as a dimer. Heme b is required as a cofactor. The cofactor is heme c.

The protein localises to the plastid. It is found in the chloroplast thylakoid membrane. In terms of biological role, component of the cytochrome b6-f complex, which mediates electron transfer between photosystem II (PSII) and photosystem I (PSI), cyclic electron flow around PSI, and state transitions. The chain is Cytochrome b6 from Liriodendron tulipifera (Tuliptree).